The primary structure comprises 310 residues: tRNA uridine(34) hydroxylase (310 aa).

The region spanning 124 to 218 is the Rhodanese domain; the sequence is SDPEVLLIDT…YFEEVPQEES (95 aa). Cys178 (cysteine persulfide intermediate) is an active-site residue.

It belongs to the TrhO family.

It carries out the reaction uridine(34) in tRNA + AH2 + O2 = 5-hydroxyuridine(34) in tRNA + A + H2O. Functionally, catalyzes oxygen-dependent 5-hydroxyuridine (ho5U) modification at position 34 in tRNAs. The protein is tRNA uridine(34) hydroxylase of Pseudomonas putida (strain ATCC 47054 / DSM 6125 / CFBP 8728 / NCIMB 11950 / KT2440).